Consider the following 1469-residue polypeptide: Protein BCL9 homolog (1469 aa).

Residues Met-1–Gln-16 show a composition bias toward polar residues. Disordered regions lie at residues Met-1–Ala-131, Ser-161–Pro-187, Glu-200–Asp-222, Glu-422–Pro-442, and Gly-454–Ser-474. Ser-9 carries the phosphoserine modification. Residue Thr-11 is modified to Phosphothreonine. Residues Pro-17–Ala-34 show a composition bias toward low complexity. Composition is skewed to polar residues over residues Ser-40–Pro-60 and Ser-90–Leu-113. Residues Ser-116 to Ser-130 show a composition bias toward low complexity. At Ser-206 the chain carries Phosphoserine. Thr-208 bears the Phosphothreonine mark. Ser-210 is modified (phosphoserine). Polar residues-rich tracts occupy residues Glu-422–Asp-438 and Gly-455–Ser-474. The ARM-binding stretch occupies residues Ser-511–Asn-555. Disordered regions lie at residues Gly-728–Val-830, Cys-844–Val-913, and Gln-961–Asn-991. A compositionally biased stretch (low complexity) spans Pro-731 to Pro-745. Residues Ile-770–Gln-781 are compositionally biased toward polar residues. Over residues Ser-782–Pro-796 the composition is skewed to low complexity. 2 stretches are compositionally biased toward polar residues: residues Pro-806–Val-830 and Cys-844–Ser-880. A phosphoserine mark is found at Ser-883, Ser-905, and Ser-911. Residues Pro-904–Val-913 are compositionally biased toward polar residues.

The protein belongs to the BCL9 family. As to quaternary structure, binds to ARM and PYGO.

It localises to the nucleus. In terms of biological role, involved in signal transduction through the Wnt pathway. The sequence is that of Protein BCL9 homolog (lgs) from Drosophila melanogaster (Fruit fly).